The sequence spans 174 residues: Caltractin ICL1e (174 aa).

A disordered region spans residues 1-33 (MSKKQQAPVAQKPVGKQQQVNRKPQDRPGLTED). 4 consecutive EF-hand domains span residues 33 to 68 (DEIE…LGFD), 88 to 103 (IDFD…KLGN), 105 to 140 (ESRD…LGET), and 141 to 174 (MTAE…KRTF).

This sequence belongs to the centrin family. In terms of assembly, monomer.

It localises to the cytoplasm. The protein localises to the cytoskeleton. In terms of biological role, plays a fundamental role in microtubule organizing center structure and function. Component of the infraciliary lattice (ICL) and the ciliary basal bodies. This Paramecium tetraurelia protein is Caltractin ICL1e (Icl1e).